The sequence spans 373 residues: Flagellar P-ring protein (373 aa).

The first 26 residues, 1–26 (MKLFFRFVTLVAVLAMSLANVAPAWA), serve as a signal peptide directing secretion.

Belongs to the FlgI family. In terms of assembly, the basal body constitutes a major portion of the flagellar organelle and consists of four rings (L,P,S, and M) mounted on a central rod.

It is found in the periplasm. The protein localises to the bacterial flagellum basal body. In terms of biological role, assembles around the rod to form the L-ring and probably protects the motor/basal body from shearing forces during rotation. This chain is Flagellar P-ring protein, found in Rhizobium johnstonii (strain DSM 114642 / LMG 32736 / 3841) (Rhizobium leguminosarum bv. viciae).